A 290-amino-acid polypeptide reads, in one-letter code: Ribosomal RNA small subunit methyltransferase A (290 aa).

The S-adenosyl-L-methionine site is built by N27, L29, G54, E75, D100, and N125.

It belongs to the class I-like SAM-binding methyltransferase superfamily. rRNA adenine N(6)-methyltransferase family. RsmA subfamily.

It localises to the cytoplasm. It carries out the reaction adenosine(1518)/adenosine(1519) in 16S rRNA + 4 S-adenosyl-L-methionine = N(6)-dimethyladenosine(1518)/N(6)-dimethyladenosine(1519) in 16S rRNA + 4 S-adenosyl-L-homocysteine + 4 H(+). Functionally, specifically dimethylates two adjacent adenosines (A1518 and A1519) in the loop of a conserved hairpin near the 3'-end of 16S rRNA in the 30S particle. May play a critical role in biogenesis of 30S subunits. The polypeptide is Ribosomal RNA small subunit methyltransferase A (Streptococcus gordonii (strain Challis / ATCC 35105 / BCRC 15272 / CH1 / DL1 / V288)).